Here is a 300-residue protein sequence, read N- to C-terminus: 4-hydroxy-tetrahydrodipicolinate synthase (300 aa).

Thr-56 contributes to the pyruvate binding site. The active-site Proton donor/acceptor is the Tyr-145. Lys-173 acts as the Schiff-base intermediate with substrate in catalysis. Val-215 is a binding site for pyruvate.

Belongs to the DapA family. Homotetramer; dimer of dimers.

It is found in the cytoplasm. It catalyses the reaction L-aspartate 4-semialdehyde + pyruvate = (2S,4S)-4-hydroxy-2,3,4,5-tetrahydrodipicolinate + H2O + H(+). It participates in amino-acid biosynthesis; L-lysine biosynthesis via DAP pathway; (S)-tetrahydrodipicolinate from L-aspartate: step 3/4. Catalyzes the condensation of (S)-aspartate-beta-semialdehyde [(S)-ASA] and pyruvate to 4-hydroxy-tetrahydrodipicolinate (HTPA). The chain is 4-hydroxy-tetrahydrodipicolinate synthase from Prochlorococcus marinus (strain MIT 9301).